The primary structure comprises 484 residues: Mitochondrial metal transporter 2 (484 aa).

A mitochondrion-targeting transit peptide spans 1–56 (MLRISIDSIKQFGSFVPGYNNTSYHAAGRAIRTSSLYSTMISANPRRCLHSSKLLN). Positions 73 to 82 (SSQNGSNSRQ) are enriched in polar residues. Residues 73–114 (SSQNGSNSRQNESEGKKEGKASSVKSLLQHTHSHSHTHMHDN) are disordered. Over residues 83-92 (NESEGKKEGK) the composition is skewed to basic and acidic residues. 5 consecutive transmembrane segments (helical) span residues 132-152 (ITWI…VGGI), 158-178 (ALLA…LTLF), 209-229 (ILAM…VGPV), 256-276 (ATNV…EWVF), and 316-336 (YFFN…GLII). A disordered region spans residues 453 to 484 (DSKGDLEHSHDTKSTNHTHTHSDSADTHTHKH).

It belongs to the cation diffusion facilitator (CDF) transporter (TC 2.A.4) family. SLC30A subfamily.

The protein localises to the mitochondrion membrane. Its function is as follows. Mitochondrial metal transporter involved in mitochondrial iron accumulation. This Saccharomyces cerevisiae (strain ATCC 204508 / S288c) (Baker's yeast) protein is Mitochondrial metal transporter 2 (MMT2).